Here is a 257-residue protein sequence, read N- to C-terminus: tRNA (cytidine/uridine/adenosine-2'-O-)-methyltransferase TrmJ (257 aa).

Residues 79 to 82 (TSAR), 115 to 117 (GRE), Ile135, and 142 to 144 (GSL) contribute to the S-adenosyl-L-methionine site.

The protein belongs to the class IV-like SAM-binding methyltransferase superfamily. RNA methyltransferase TrmH family. In terms of assembly, homodimer.

The protein localises to the cytoplasm. It carries out the reaction cytidine(32) in tRNA + S-adenosyl-L-methionine = 2'-O-methylcytidine(32) in tRNA + S-adenosyl-L-homocysteine + H(+). The enzyme catalyses uridine(32) in tRNA + S-adenosyl-L-methionine = 2'-O-methyluridine(32) in tRNA + S-adenosyl-L-homocysteine + H(+). It catalyses the reaction adenosine(32) in tRNA + S-adenosyl-L-methionine = 2'-O-methyladenosine(32) in tRNA + S-adenosyl-L-homocysteine + H(+). In terms of biological role, catalyzes the formation of 2'O-methylated cytidine (Cm32), 2'O-methylated uridine (Um32) or 2'O-methylated adenosine (Am32) at position 32 in tRNA. Confers resistance to oxidative stress. The sequence is that of tRNA (cytidine/uridine/adenosine-2'-O-)-methyltransferase TrmJ from Pseudomonas aeruginosa (strain UCBPP-PA14).